A 488-amino-acid polypeptide reads, in one-letter code: Alpha,alpha-trehalose-phosphate synthase [UDP-forming] 56 kDa subunit (488 aa).

D-glucose 6-phosphate-binding residues include tyrosine 102 and aspartate 156. The UDP site is built by arginine 293 and lysine 298. UDP-alpha-D-glucose is bound by residues arginine 293 and lysine 298. Arginine 331 contributes to the D-glucose 6-phosphate binding site. UDP is bound by residues isoleucine 370 and 396-400 (LVSYE). UDP-alpha-D-glucose-binding positions include isoleucine 370 and 392–400 (DGMNLVSYE).

The protein belongs to the glycosyltransferase 20 family. As to quaternary structure, trehalose synthase/phosphatase complex contains three or four polypeptides of 56 kDa (TPS1), 102 kDa (TPS2), 115 kDa (TPS3) and 123 kDa (TSL1).

It catalyses the reaction D-glucose 6-phosphate + UDP-alpha-D-glucose = alpha,alpha-trehalose 6-phosphate + UDP + H(+). Its pathway is carbohydrate biosynthesis. Functionally, synthase catalytic subunit of the trehalose synthase complex that catalyzes the production of trehalose from glucose-6-phosphate and UDP-alpha-D-glucose in a two step process. Can function independently of the complex. This chain is Alpha,alpha-trehalose-phosphate synthase [UDP-forming] 56 kDa subunit, found in Kluyveromyces lactis (strain ATCC 8585 / CBS 2359 / DSM 70799 / NBRC 1267 / NRRL Y-1140 / WM37) (Yeast).